The chain runs to 1316 residues: DNA-directed RNA polymerase subunit beta' (1316 aa).

Residues cysteine 60, cysteine 62, cysteine 75, and cysteine 78 each contribute to the Zn(2+) site. Residues aspartate 535, aspartate 537, and aspartate 539 each contribute to the Mg(2+) site. Zn(2+) contacts are provided by cysteine 891, cysteine 968, cysteine 975, and cysteine 978.

It belongs to the RNA polymerase beta' chain family. As to quaternary structure, the RNAP catalytic core consists of 2 alpha, 1 beta, 1 beta' and 1 omega subunit. When a sigma factor is associated with the core the holoenzyme is formed, which can initiate transcription. Mg(2+) is required as a cofactor. Requires Zn(2+) as cofactor.

The catalysed reaction is RNA(n) + a ribonucleoside 5'-triphosphate = RNA(n+1) + diphosphate. DNA-dependent RNA polymerase catalyzes the transcription of DNA into RNA using the four ribonucleoside triphosphates as substrates. The chain is DNA-directed RNA polymerase subunit beta' from Mycobacterium avium (strain 104).